A 343-amino-acid chain; its full sequence is MDDVIIIGGGPAGLFASFYSGLRGMRVRIIDIQDKLGGKMHVYPEKIIWDIGGLAPKPCFEVIQDTVKQGLHFEPEVNLEERVIDIRKIEQQHFEVETDKGNVFSSKSVIIAIGGGIINPKQLDIKDAERYKLTNLHYVVQSLKKFKDKHVLISGAGNSALDWANDLSGYAKSVTLIYRKADIKGYEVMKEKLEQLNVKKLPNTHIHQLIGDETQTQIEQVILENIETGEHTVKSFDDVIISHGFDRENTLLEQSSAKVDMFNEYSIKGFGNTATSIDGLYACGDIIYHEAKAHLIASAFSDAANAANLAKLYIEPKAKAEGYVSSHNEIFKESNKVVMKKYL.

Positions 31, 39, 43, 83, 118, 285, and 326 each coordinate FAD.

It belongs to the ferredoxin--NADP reductase type 2 family. As to quaternary structure, homodimer. It depends on FAD as a cofactor.

It catalyses the reaction 2 reduced [2Fe-2S]-[ferredoxin] + NADP(+) + H(+) = 2 oxidized [2Fe-2S]-[ferredoxin] + NADPH. The protein is Ferredoxin--NADP reductase of Staphylococcus saprophyticus subsp. saprophyticus (strain ATCC 15305 / DSM 20229 / NCIMB 8711 / NCTC 7292 / S-41).